The following is a 332-amino-acid chain: Adenosine deaminase (332 aa).

2 residues coordinate Zn(2+): His-12 and His-14. Substrate-binding residues include His-14, Asp-16, and Gly-170. His-197 contacts Zn(2+). Residue Glu-200 is the Proton donor of the active site. Position 278 (Asp-278) interacts with Zn(2+). Asp-279 contributes to the substrate binding site.

Belongs to the metallo-dependent hydrolases superfamily. Adenosine and AMP deaminases family. Adenosine deaminase subfamily. Requires Zn(2+) as cofactor.

It carries out the reaction adenosine + H2O + H(+) = inosine + NH4(+). The catalysed reaction is 2'-deoxyadenosine + H2O + H(+) = 2'-deoxyinosine + NH4(+). Catalyzes the hydrolytic deamination of adenosine and 2-deoxyadenosine. The chain is Adenosine deaminase from Yersinia enterocolitica serotype O:8 / biotype 1B (strain NCTC 13174 / 8081).